The sequence spans 55 residues: ATP synthase F(0) complex subunit 8 (55 aa).

A helical membrane pass occupies residues 9 to 29; it reads WFAIMVFSWFVFLIFLPPKIM.

The protein belongs to the ATPase protein 8 family. In terms of assembly, component of the ATP synthase complex composed at least of ATP5F1A/subunit alpha, ATP5F1B/subunit beta, ATP5MC1/subunit c (homooctomer), MT-ATP6/subunit a, MT-ATP8/subunit 8, ATP5ME/subunit e, ATP5MF/subunit f, ATP5MG/subunit g, ATP5MK/subunit k, ATP5MJ/subunit j, ATP5F1C/subunit gamma, ATP5F1D/subunit delta, ATP5F1E/subunit epsilon, ATP5PF/subunit F6, ATP5PB/subunit b, ATP5PD/subunit d, ATP5PO/subunit OSCP. ATP synthase complex consists of a soluble F(1) head domain (subunits alpha(3) and beta(3)) - the catalytic core - and a membrane F(0) domain - the membrane proton channel (subunits c, a, 8, e, f, g, k and j). These two domains are linked by a central stalk (subunits gamma, delta, and epsilon) rotating inside the F1 region and a stationary peripheral stalk (subunits F6, b, d, and OSCP).

Its subcellular location is the mitochondrion membrane. Its function is as follows. Subunit 8, of the mitochondrial membrane ATP synthase complex (F(1)F(0) ATP synthase or Complex V) that produces ATP from ADP in the presence of a proton gradient across the membrane which is generated by electron transport complexes of the respiratory chain. ATP synthase complex consist of a soluble F(1) head domain - the catalytic core - and a membrane F(1) domain - the membrane proton channel. These two domains are linked by a central stalk rotating inside the F(1) region and a stationary peripheral stalk. During catalysis, ATP synthesis in the catalytic domain of F(1) is coupled via a rotary mechanism of the central stalk subunits to proton translocation. In vivo, can only synthesize ATP although its ATP hydrolase activity can be activated artificially in vitro. Part of the complex F(0) domain. In Tetraodon nigroviridis (Spotted green pufferfish), this protein is ATP synthase F(0) complex subunit 8.